The primary structure comprises 160 residues: Putative antiporter subunit mnhE2 (160 aa).

The next 3 helical transmembrane spans lie at 23–43, 55–75, and 100–120; these read FKFTTFFAGFLIGLIVIYILH, IWVAIKFLAVYLYQLITSSIS, and SNWAITFLTILIIITPGSTVI.

This sequence belongs to the CPA3 antiporters (TC 2.A.63) subunit E family. In terms of assembly, may form a heterooligomeric complex that consists of seven subunits: mnhA2, mnhB2, mnhC2, mnhD2, mnhE2, mnhF2 and mnhG2.

The protein localises to the cell membrane. This chain is Putative antiporter subunit mnhE2 (mnhE2), found in Staphylococcus epidermidis (strain ATCC 35984 / DSM 28319 / BCRC 17069 / CCUG 31568 / BM 3577 / RP62A).